A 213-amino-acid polypeptide reads, in one-letter code: Transmembrane protein 186 (213 aa).

Topologically, residues 1–79 (MAALLRAVRR…FLSRLKLAQT (79 aa)) are mitochondrial matrix. A helical transmembrane segment spans residues 80–100 (ALTVVALPPGYYLYSQGLLTL). Residues 101 to 102 (NT) are Mitochondrial intermembrane-facing. The helical transmembrane segment at 103–123 (VCLMSGISGFALTMLCWMSYF) threads the bilayer. The Mitochondrial matrix segment spans residues 124–213 (LRRLVGILYL…QVFGVHQMLK (90 aa)).

This sequence belongs to the TMEM186 family. As to quaternary structure, part of the mitochondrial complex I assembly/MCIA complex that comprises at least the core subunits TMEM126B, NDUFAF1, ECSIT and ACAD9 and complement subunits such as COA1 and TMEM186. Interacts with MT-ND3.

Its subcellular location is the mitochondrion inner membrane. Functionally, as part of the MCIA complex, required for efficient assembly of the mitochondrial complex I. The polypeptide is Transmembrane protein 186 (Homo sapiens (Human)).